Consider the following 391-residue polypeptide: MEPLRVLELYSGVGGMHHALRESCIPAQVVAAIDVNTVANEVYKYNFPHTQLLAKTIEGITLEEFDRLSFDMILMSPPCQPFTRIGRQGDMTDSRTNSFLHILDILPRLQKLPKYILLENVKGFEVSSTRDLLIQTIENCGFQYQEFLLSPTSLGIPNSRLRYFLIAKLQSEPLPFQAPGQVLMEFPKIESVHPQKYAMDVENKIQEKNVEPNISFDGSIQCSGKDAILFKLETAEEIHRKNQQDSDLSVKMLKDFLEDDTDVNQYLLPPKSLLRYALLLDIVQPTCRRSVCFTKGYGSYIEGTGSVLQTAEDVQVENIYKSLTNLSQEEQITKLLILKLRYFTPKEIANLLGFPPEFGFPEKITVKQRYRLLGNSLNVHVVAKLIKILYE.

Residues 4–391 (LRVLELYSGV…VAKLIKILYE (388 aa)) form the SAM-dependent MTase C5-type domain. Residues 13–15 (VGG), Asp-34, 57–58 (IE), and Ser-76 each bind S-adenosyl-L-methionine. Cys-79 is an active-site residue. Ser-376 lines the S-adenosyl-L-methionine pocket.

Belongs to the class I-like SAM-binding methyltransferase superfamily. C5-methyltransferase family. As to expression, ubiquitous. Higher expression in testis, ovary and thymus and at much lower levels in spleen, prostate, colon, small intestine, and peripheral blood leukocytes.

The protein localises to the cytoplasm. It carries out the reaction cytidine(38) in tRNA + S-adenosyl-L-methionine = 5-methylcytidine(38) in tRNA + S-adenosyl-L-homocysteine + H(+). In terms of biological role, specifically methylates cytosine 38 in the anticodon loop of tRNA(Asp). Has higher activity on tRNA(Asp) modified with queuosine at position 34. The protein is tRNA (cytosine(38)-C(5))-methyltransferase (TRDMT1) of Homo sapiens (Human).